Consider the following 490-residue polypeptide: Argininosuccinate lyase (490 aa).

Disordered regions lie at residues 426-452 (DPESSVASRDSLGGPAPESMAAALSAA) and 469-490 (ALATAADERERVVSSYDSTAPE). Residues 440 to 452 (PAPESMAAALSAA) show a composition bias toward low complexity. The segment covering 469 to 480 (ALATAADERERV) has biased composition (basic and acidic residues).

It belongs to the lyase 1 family. Argininosuccinate lyase subfamily.

Its subcellular location is the cytoplasm. The catalysed reaction is 2-(N(omega)-L-arginino)succinate = fumarate + L-arginine. It functions in the pathway amino-acid biosynthesis; L-arginine biosynthesis; L-arginine from L-ornithine and carbamoyl phosphate: step 3/3. The chain is Argininosuccinate lyase from Natronomonas pharaonis (strain ATCC 35678 / DSM 2160 / CIP 103997 / JCM 8858 / NBRC 14720 / NCIMB 2260 / Gabara) (Halobacterium pharaonis).